The primary structure comprises 426 residues: Enolase (426 aa).

Gln-163 is a binding site for (2R)-2-phosphoglycerate. The active-site Proton donor is the Glu-205. The Mg(2+) site is built by Asp-242, Glu-283, and Asp-310. 4 residues coordinate (2R)-2-phosphoglycerate: Lys-335, Arg-364, Ser-365, and Lys-386. The active-site Proton acceptor is Lys-335.

This sequence belongs to the enolase family. Mg(2+) serves as cofactor.

It is found in the cytoplasm. Its subcellular location is the secreted. It localises to the cell surface. It carries out the reaction (2R)-2-phosphoglycerate = phosphoenolpyruvate + H2O. It participates in carbohydrate degradation; glycolysis; pyruvate from D-glyceraldehyde 3-phosphate: step 4/5. Functionally, catalyzes the reversible conversion of 2-phosphoglycerate (2-PG) into phosphoenolpyruvate (PEP). It is essential for the degradation of carbohydrates via glycolysis. This is Enolase from Cutibacterium acnes (strain DSM 16379 / KPA171202) (Propionibacterium acnes).